The following is a 345-amino-acid chain: Acetylserotonin O-methyltransferase (345 aa).

S-adenosyl-L-methionine contacts are provided by residues Tyr-147, Trp-164, Asp-210, 235–237 (GDF), and Arg-252. Catalysis depends on His-255, which acts as the Proton donor/acceptor. Asp-256, Asn-302, and Gln-306 together coordinate substrate.

Belongs to the class I-like SAM-binding methyltransferase superfamily. Cation-independent O-methyltransferase family. Homodimer. As to expression, expressed in the pineal gland (at protein level). In the retina, very low expression is found at the mRNA level, and not at the protein level.

The catalysed reaction is N-acetylserotonin + S-adenosyl-L-methionine = melatonin + S-adenosyl-L-homocysteine + H(+). It functions in the pathway aromatic compound metabolism; melatonin biosynthesis; melatonin from serotonin: step 1/2. Functionally, catalyzes the transfer of a methyl group onto N-acetylserotonin, producing melatonin (N-acetyl-5-methoxytryptamine). In terms of biological role, does not show Acetylserotonin O-methyltransferase activity. The polypeptide is Acetylserotonin O-methyltransferase (ASMT) (Homo sapiens (Human)).